The following is a 905-amino-acid chain: Microtubule-associated protein 10 (905 aa).

Disordered stretches follow at residues 30–51 (AAAVEQEEEEEEKEQGEASSPR), 199–235 (TRTGGGAEVSPQTQQERQQLQQPASQPSPKEADKPLG), 329–362 (APEEMDDASPEKKRVNPPAHRSCLKHPSSAAHEH), 434–458 (SPESSAKSTCRSEAKKDKRSVGGCE), 547–586 (SSAEQSQKPQLPEDKYLDSDASFTENSDTSRQISGVFDEP), 721–772 (RSFK…GSPV), and 786–855 (KSLE…SSYL). Acidic residues predominate over residues 34–43 (EQEEEEEEKE). Residues 208–227 (SPQTQQERQQLQQPASQPSP) are compositionally biased toward low complexity. Positions 443–453 (CRSEAKKDKRS) are enriched in basic and acidic residues. Residues 567–579 (ASFTENSDTSRQI) show a composition bias toward polar residues. A compositionally biased stretch (basic and acidic residues) spans 721–736 (RSFKAHDSSSRTENPK). Over residues 737 to 748 (HSQYTSKSSDTG) the composition is skewed to polar residues. A compositionally biased stretch (low complexity) spans 790-801 (EASSISASDLSS). Positions 830–855 (SVKTRSSWKSLEKSQSPQTSQVSSYL) are enriched in polar residues.

In terms of assembly, interacts (via middle region) with microtubules. Expressed in different cell lines (at protein level).

The protein localises to the cytoplasm. The protein resides in the cytoskeleton. It localises to the spindle pole. Its subcellular location is the microtubule organizing center. It is found in the centrosome. The protein localises to the midbody. Microtubule-associated protein (MAP) that plays a role in the regulation of cell division; promotes microtubule stability and participates in the organization of the spindle midzone and normal progress of cytokinesis. The sequence is that of Microtubule-associated protein 10 (MAP10) from Homo sapiens (Human).